We begin with the raw amino-acid sequence, 446 residues long: Tripartite motif-containing protein 43C (446 aa).

The RING-type zinc-finger motif lies at 16–57 (CSICQGIFMDPVYLRCGHKFCETCLLLFQEDIKFPAYCPTCR). The segment at 88-129 (SEEHKCVTHKAKKMIFCDKSKILLCHLCSDSQEHSGHTHCSI) adopts a B box-type zinc-finger fold. The Zn(2+) site is built by Cys93, His96, Cys115, and His121. Positions 271–446 (RLRAHSIPGL…VRPFFFAAYT (176 aa)) constitute a B30.2/SPRY domain.

Belongs to the TRIM/RBCC family.

The polypeptide is Tripartite motif-containing protein 43C (Mus musculus (Mouse)).